We begin with the raw amino-acid sequence, 264 residues long: MLELRLVQGSLLKKVLESIKDLVNDANFDFSSSGFSLQSMDSSHVALVALLLKSEGFEHYRCDRNTSMGMNLGNMSKMLKCAGNDDIITIKGDDGSDTVTFMFESPTQDKIADFEMKLMDIDSEHLGIPEAEYHAIVKMPSAEFARICKDLASIGDTVVISVTKEGVKFSTRGDIGTANIVLRQNTTVDKPEDATVIEMNEPVSMTFALRYMNSFTKATPLSNTVTISMSPDLPVVVEYKIAEMGYVRFYLAPKMEEDEPEPGA.

Residues 61–80 (RCDRNTSMGMNLGNMSKMLK) mediate DNA binding.

The protein belongs to the PCNA family.

It localises to the nucleus. Its function is as follows. This protein is an auxiliary protein of DNA polymerase delta and is involved in the control of eukaryotic DNA replication by increasing the polymerase's processibility during elongation of the leading strand. The polypeptide is Proliferating cell nuclear antigen (PCNA) (Populus nigra (Lombardy poplar)).